A 163-amino-acid polypeptide reads, in one-letter code: COP9 signalosome complex subunit 9 (163 aa).

A PCI domain is found at 5 to 120; sequence EVLHAVLDPK…SVGRRIKVLR (116 aa).

As to quaternary structure, component of a COP9 signalosome-like (CSN) complex.

The protein localises to the cytoplasm. It is found in the nucleus. Its function is as follows. Component of the COP9 signalosome (CSN) complex that acts as a regulator of the ubiquitin (Ubl) conjugation pathway by mediating the deneddylation of the cullin subunit of SCF-type E3 ubiquitin-protein ligase complexes. The complex is involved in the regulation of the mating pheromone response. The chain is COP9 signalosome complex subunit 9 (CSN9) from Eremothecium gossypii (strain ATCC 10895 / CBS 109.51 / FGSC 9923 / NRRL Y-1056) (Yeast).